Reading from the N-terminus, the 447-residue chain is UDP-N-acetylmuramoylalanine--D-glutamate ligase (447 aa).

An ATP-binding site is contributed by 130-136 (GTSGKTT).

This sequence belongs to the MurCDEF family.

It localises to the cytoplasm. The catalysed reaction is UDP-N-acetyl-alpha-D-muramoyl-L-alanine + D-glutamate + ATP = UDP-N-acetyl-alpha-D-muramoyl-L-alanyl-D-glutamate + ADP + phosphate + H(+). It participates in cell wall biogenesis; peptidoglycan biosynthesis. Its function is as follows. Cell wall formation. Catalyzes the addition of glutamate to the nucleotide precursor UDP-N-acetylmuramoyl-L-alanine (UMA). This chain is UDP-N-acetylmuramoylalanine--D-glutamate ligase, found in Oleidesulfovibrio alaskensis (strain ATCC BAA-1058 / DSM 17464 / G20) (Desulfovibrio alaskensis).